The chain runs to 158 residues: Endoribonuclease YbeY (158 aa).

Residues His-118, His-122, and His-128 each contribute to the Zn(2+) site.

Belongs to the endoribonuclease YbeY family. Zn(2+) serves as cofactor.

Its subcellular location is the cytoplasm. Its function is as follows. Single strand-specific metallo-endoribonuclease involved in late-stage 70S ribosome quality control and in maturation of the 3' terminus of the 16S rRNA. This Haemophilus ducreyi (strain 35000HP / ATCC 700724) protein is Endoribonuclease YbeY.